The primary structure comprises 472 residues: UDP-glycosyltransferase 2 (472 aa).

UDP-alpha-D-glucose is bound by residues Ser-283, 348 to 349, 366 to 374, and 388 to 391; these read WA, HCGWNSVLE, and YAEQ.

This sequence belongs to the UDP-glycosyltransferase family. As to expression, highly expressed in roots. Expressed in leaves and stems.

Its function is as follows. Glycosyltransferase that possesses isoflavonoids 4'-O- and 7-O-glucosyltransferase activities. Shows a successive glucosylation toward the acceptors producing their corresponding 4',7-O-diglucosides. Can use genistein, formononetin, daidzein, liquiritigenin and naringenin as substrates. Also shows a 3'-O-glucosylation activity in vitro. The chain is UDP-glycosyltransferase 2 from Pueraria montana var. lobata (Kudzu vine).